A 330-amino-acid polypeptide reads, in one-letter code: Aspartate--ammonia ligase (330 aa).

Belongs to the class-II aminoacyl-tRNA synthetase family. AsnA subfamily.

The protein localises to the cytoplasm. The catalysed reaction is L-aspartate + NH4(+) + ATP = L-asparagine + AMP + diphosphate + H(+). It participates in amino-acid biosynthesis; L-asparagine biosynthesis; L-asparagine from L-aspartate (ammonia route): step 1/1. The polypeptide is Aspartate--ammonia ligase (Streptococcus pyogenes serotype M49 (strain NZ131)).